The following is a 517-amino-acid chain: E3 ubiquitin-protein ligase TRIM65 (517 aa).

Ala2 bears the N-acetylalanine mark. An RING-type zinc finger spans residues 12-51 (CAICLGLYQDPVTLPCGHNFCGACIRDWWDRCGKACPECR). The segment at 75-94 (AGPARDPGPDPGPGPDPAAR) is disordered. A B box-type zinc finger spans residues 90 to 137 (DPAARCPRHGRPLELFCRTEGRCVCSVCTVRECRLHERALLDAERLKR). Residues Cys95, His98, Cys117, and His125 each coordinate Zn(2+). Residues 139–227 (AQLRASLEVT…QRLRVHLEAV (89 aa)) are a coiled coil. Position 185 is a phosphoserine (Ser185). Lys206 is covalently cross-linked ((Microbial infection) Glycyl lysine isopeptide (Lys-Gly) (interchain with G-Cter in ubiquitin)). The 194-residue stretch at 313–506 (APVPSTVCPL…LTLCHQPGAV (194 aa)) folds into the B30.2/SPRY domain.

The protein belongs to the TRIM/RBCC family. Homo-multimerizes. Interacts with ARRDC4.

It is found in the cytoplasm. It carries out the reaction S-ubiquitinyl-[E2 ubiquitin-conjugating enzyme]-L-cysteine + [acceptor protein]-L-lysine = [E2 ubiquitin-conjugating enzyme]-L-cysteine + N(6)-ubiquitinyl-[acceptor protein]-L-lysine.. It participates in protein modification; protein ubiquitination. In terms of biological role, E3 ubiquitin ligase that plays a role in several processes including innate immnity, autophagy or inflammation. Negatively regulates miRNAs by modulating the ubiquitination and stability of TNRC6A, a protein involved in RNA-mediated gene silencing by both micro-RNAs (miRNAs) and short interfering RNAs. This ubiquitination results in the suppressed expression of miR-138-5p leading to increased autophagy. Upon enteroviral infection, promotes 'Lys-63'-mediated ubiquitination activation of IFIH1/MDA5 leading to innate signaling cascade. Mechanistically, selectively recognizes MDA5 filaments that occur on dsRNAs. Plays also a role in limitation of inflammation through different mechanisms. First, promotes 'Lys-48'-mediated ubiquitination of VCAM1 leading to its degradation and limitation of LPS-induced lung inflammation. In addition, negatively regulates inflammasome activation by promoting 'lys48'-linked ubiquitination of NLRP3 which is critical for the inhibition of NLRP3 inflammasome activation in resting macrophages. This Homo sapiens (Human) protein is E3 ubiquitin-protein ligase TRIM65 (TRIM65).